The primary structure comprises 142 residues: Hemoglobin subunit alpha-1 (142 aa).

In terms of domain architecture, Globin spans 2 to 142; it reads LLSADDKKHI…VSTVLTSKYR (141 aa). Residue His59 participates in O2 binding. His88 lines the heme b pocket.

It belongs to the globin family. Heterotetramer of two alpha chains and two beta chains. In terms of tissue distribution, red blood cells.

Involved in oxygen transport from the lung to the various peripheral tissues. This chain is Hemoglobin subunit alpha-1 (hba1), found in Xenopus laevis (African clawed frog).